The following is a 502-amino-acid chain: Medium/long-chain-fatty-acid--CoA ligase FadD17 (502 aa).

It belongs to the ATP-dependent AMP-binding enzyme family.

The enzyme catalyses a medium-chain fatty acid + ATP + CoA = a medium-chain fatty acyl-CoA + AMP + diphosphate. It catalyses the reaction a long-chain fatty acid + ATP + CoA = a long-chain fatty acyl-CoA + AMP + diphosphate. It participates in lipid metabolism; fatty acid biosynthesis. Its function is as follows. Catalyzes the activation of medium/long-chain fatty acids as acyl-coenzyme A (acyl-CoA), which are then transferred to the multifunctional polyketide synthase (PKS) type III for further chain extension. This chain is Medium/long-chain-fatty-acid--CoA ligase FadD17 (fadD17), found in Mycobacterium bovis (strain ATCC BAA-935 / AF2122/97).